A 303-amino-acid chain; its full sequence is N-acetyl-D-glucosamine kinase (303 aa).

ATP-binding positions include 4–11 (GFDIGGTK) and 133–140 (GVGGGLIF). Positions 157, 177, 179, and 184 each coordinate Zn(2+).

The protein belongs to the ROK (NagC/XylR) family. NagK subfamily.

The enzyme catalyses N-acetyl-D-glucosamine + ATP = N-acetyl-D-glucosamine 6-phosphate + ADP + H(+). It functions in the pathway cell wall biogenesis; peptidoglycan recycling. Its function is as follows. Catalyzes the phosphorylation of N-acetyl-D-glucosamine (GlcNAc) derived from cell-wall degradation, yielding GlcNAc-6-P. This chain is N-acetyl-D-glucosamine kinase, found in Escherichia coli (strain K12 / DH10B).